Reading from the N-terminus, the 348-residue chain is Protein-glutamate methylesterase/protein-glutamine glutaminase 5 (348 aa).

The 118-residue stretch at 8-125 (RVLVVDDSAF…TERLYELGGE (118 aa)) folds into the Response regulatory domain. The residue at position 59 (aspartate 59) is a 4-aspartylphosphate. The 192-residue stretch at 157 to 348 (RAAAKSLVVV…MLALLRRHVR (192 aa)) folds into the CheB-type methylesterase domain. Active-site residues include serine 169, histidine 196, and aspartate 292.

The protein belongs to the CheB family. In terms of processing, phosphorylated by CheA. Phosphorylation of the N-terminal regulatory domain activates the methylesterase activity.

It localises to the cytoplasm. It carries out the reaction [protein]-L-glutamate 5-O-methyl ester + H2O = L-glutamyl-[protein] + methanol + H(+). It catalyses the reaction L-glutaminyl-[protein] + H2O = L-glutamyl-[protein] + NH4(+). Functionally, involved in chemotaxis. Part of a chemotaxis signal transduction system that modulates chemotaxis in response to various stimuli. Catalyzes the demethylation of specific methylglutamate residues introduced into the chemoreceptors (methyl-accepting chemotaxis proteins or MCP) by CheR. Also mediates the irreversible deamidation of specific glutamine residues to glutamic acid. The sequence is that of Protein-glutamate methylesterase/protein-glutamine glutaminase 5 from Myxococcus xanthus (strain DK1622).